Consider the following 442-residue polypeptide: Ribosomal protein uS12 methylthiotransferase RimO (442 aa).

Positions 9–119 (PRIGFVSLGC…VLSHVHQYVP (111 aa)) constitute an MTTase N-terminal domain. [4Fe-4S] cluster contacts are provided by cysteine 18, cysteine 54, cysteine 83, cysteine 151, cysteine 155, and cysteine 158. The Radical SAM core domain maps to 137–375 (LTPRHYAYLK…QLQQAISTQR (239 aa)). The 66-residue stretch at 377 to 442 (QDKIGREVLV…DEYDLWGSRV (66 aa)) folds into the TRAM domain.

Belongs to the methylthiotransferase family. RimO subfamily. It depends on [4Fe-4S] cluster as a cofactor.

It is found in the cytoplasm. It catalyses the reaction L-aspartate(89)-[ribosomal protein uS12]-hydrogen + (sulfur carrier)-SH + AH2 + 2 S-adenosyl-L-methionine = 3-methylsulfanyl-L-aspartate(89)-[ribosomal protein uS12]-hydrogen + (sulfur carrier)-H + 5'-deoxyadenosine + L-methionine + A + S-adenosyl-L-homocysteine + 2 H(+). In terms of biological role, catalyzes the methylthiolation of an aspartic acid residue of ribosomal protein uS12. The polypeptide is Ribosomal protein uS12 methylthiotransferase RimO (Pectobacterium atrosepticum (strain SCRI 1043 / ATCC BAA-672) (Erwinia carotovora subsp. atroseptica)).